The following is a 182-amino-acid chain: MRILGIDPGLRTTGFGVIDVAGADLTYVASGTISTLHLDKGQLPARLKVLFDGIREVVARYQPECASVEIVFVNVNPQSTLLLGQARGACITALVSGDLPVAEYTALQMKQAVVGYGRADKSQVQEMVRRLLALPGLPGPDAADALGLAITHAHAAKALARLAQADGVMGAGSGKYKAGRSR.

Active-site residues include D7, E69, and D141. 3 residues coordinate Mg(2+): D7, E69, and D141.

Belongs to the RuvC family. Homodimer which binds Holliday junction (HJ) DNA. The HJ becomes 2-fold symmetrical on binding to RuvC with unstacked arms; it has a different conformation from HJ DNA in complex with RuvA. In the full resolvosome a probable DNA-RuvA(4)-RuvB(12)-RuvC(2) complex forms which resolves the HJ. It depends on Mg(2+) as a cofactor.

It is found in the cytoplasm. The enzyme catalyses Endonucleolytic cleavage at a junction such as a reciprocal single-stranded crossover between two homologous DNA duplexes (Holliday junction).. Its function is as follows. The RuvA-RuvB-RuvC complex processes Holliday junction (HJ) DNA during genetic recombination and DNA repair. Endonuclease that resolves HJ intermediates. Cleaves cruciform DNA by making single-stranded nicks across the HJ at symmetrical positions within the homologous arms, yielding a 5'-phosphate and a 3'-hydroxyl group; requires a central core of homology in the junction. The consensus cleavage sequence is 5'-(A/T)TT(C/G)-3'. Cleavage occurs on the 3'-side of the TT dinucleotide at the point of strand exchange. HJ branch migration catalyzed by RuvA-RuvB allows RuvC to scan DNA until it finds its consensus sequence, where it cleaves and resolves the cruciform DNA. This Albidiferax ferrireducens (strain ATCC BAA-621 / DSM 15236 / T118) (Rhodoferax ferrireducens) protein is Crossover junction endodeoxyribonuclease RuvC.